The chain runs to 432 residues: Adenosine 3'-phospho 5'-phosphosulfate transporter 1 (432 aa).

Transmembrane regions (helical) follow at residues 5–25 (WWAV…ETPE), 40–60 (VVNA…VQYF), 109–129 (ALKL…WGVL), 154–174 (FLVL…CVLC), 238–258 (WEYL…LSSG), 265–285 (PATT…DSFT), 299–319 (SVQM…GSLL), 353–373 (LFIF…IMTL), and 387–407 (GHTV…ALLL). Residue Ser427 is modified to Phosphoserine.

Belongs to the nucleotide-sugar transporter family. SLC35B subfamily.

The protein localises to the golgi apparatus membrane. It catalyses the reaction 3'-phosphoadenylyl sulfate(in) + adenosine 3',5'-bisphosphate(out) = 3'-phosphoadenylyl sulfate(out) + adenosine 3',5'-bisphosphate(in). Its function is as follows. Probably functions as a 3'-phosphoadenylyl sulfate:adenosine 3',5'-bisphosphate antiporter at the Golgi membranes. Mediates the transport from the cytosol into the lumen of the Golgi of 3'-phosphoadenylyl sulfate/adenosine 3'-phospho 5'-phosphosulfate (PAPS), a universal sulfuryl donor for sulfation events that take place in that compartment. The protein is Adenosine 3'-phospho 5'-phosphosulfate transporter 1 of Pongo abelii (Sumatran orangutan).